The chain runs to 346 residues: Peripherin-2 (346 aa).

At methionine 1–asparagine 24 the chain is on the cytoplasmic side. A helical membrane pass occupies residues tryptophan 25–isoleucine 43. Residues glutamate 44–proline 61 are Lumenal-facing. The N-linked (GlcNAc...) asparagine glycan is linked to asparagine 53. Residues asparagine 62–lysine 80 traverse the membrane as a helical segment. Residues isoleucine 81–lysine 99 are Cytoplasmic-facing. The helical transmembrane segment at proline 100–arginine 123 threads the bilayer. Topologically, residues glycine 124 to serine 264 are lumenal. Asparagine 229 carries N-linked (GlcNAc...) asparagine glycosylation. Residues methionine 265–leucine 290 traverse the membrane as a helical segment. Residues glutamate 291–glycine 346 are Cytoplasmic-facing. An interaction with MREG region spans residues proline 341–glycine 346.

The protein belongs to the PRPH2/ROM1 family. Homodimer; disulfide-linked. Forms a homotetramer. Forms a heterotetramer with ROM1. Homotetramer and heterotetramer core complexes go on to form higher order complexes by formation of intermolecular disulfide bonds. Interacts with MREG. Interacts with STX3 isoform 3B. Interacts with SNAP25. In terms of tissue distribution, expressed in the retina (at protein level).

The protein localises to the membrane. It localises to the cell projection. Its subcellular location is the cilium. The protein resides in the photoreceptor outer segment. It is found in the photoreceptor inner segment. Functionally, essential for retina photoreceptor outer segment disk morphogenesis, may also play a role with ROM1 in the maintenance of outer segment disk structure. Required for the maintenance of retinal outer nuclear layer thickness. Required for the correct development and organization of the photoreceptor inner segment. The sequence is that of Peripherin-2 (Prph2) from Mus musculus (Mouse).